Reading from the N-terminus, the 193-residue chain is UPF0301 protein Fphi_1754 (193 aa).

It belongs to the UPF0301 (AlgH) family.

The protein is UPF0301 protein Fphi_1754 of Francisella philomiragia subsp. philomiragia (strain ATCC 25017 / CCUG 19701 / FSC 153 / O#319-036).